The following is a 215-amino-acid chain: Beta-crystallin A3-1 (215 aa).

The segment at 1-30 is N-terminal arm; the sequence is MEIPVDQTEREDITSEKMAQINPLPVHLGP. Beta/gamma crystallin 'Greek key' domains are found at residues 31–70 and 71–117; these read WKIT…KVEC and GAWI…RPIC. A connecting peptide region spans residues 118-123; the sequence is SANHIE. 2 consecutive Beta/gamma crystallin 'Greek key' domains span residues 124 to 165 and 166 to 214; these read SKLV…KVQC and GAWV…RRIQ.

It belongs to the beta/gamma-crystallin family. In terms of assembly, homo/heterodimer, or complexes of higher-order. The structure of beta-crystallin oligomers seems to be stabilized through interactions between the N-terminal arms. In terms of processing, the N-terminus is blocked.

Crystallins are the dominant structural components of the vertebrate eye lens. The sequence is that of Beta-crystallin A3-1 from Aquarana catesbeiana (American bullfrog).